The chain runs to 149 residues: Transcriptional repressor NrdR (149 aa).

Residues 3–34 fold into a zinc finger; sequence CPFCSATDTKVIDSRLVADGHQVRRRRECVQC. The 91-residue stretch at 49 to 139 folds into the ATP-cone domain; it reads PRVVKQDGSR…VYRAFEDVSE (91 aa).

It belongs to the NrdR family. Requires Zn(2+) as cofactor.

Functionally, negatively regulates transcription of bacterial ribonucleotide reductase nrd genes and operons by binding to NrdR-boxes. The polypeptide is Transcriptional repressor NrdR (Shewanella halifaxensis (strain HAW-EB4)).